Here is a 114-residue protein sequence, read N- to C-terminus: Large ribosomal subunit protein uL22 (114 aa).

Belongs to the universal ribosomal protein uL22 family. In terms of assembly, part of the 50S ribosomal subunit.

In terms of biological role, this protein binds specifically to 23S rRNA; its binding is stimulated by other ribosomal proteins, e.g. L4, L17, and L20. It is important during the early stages of 50S assembly. It makes multiple contacts with different domains of the 23S rRNA in the assembled 50S subunit and ribosome. The globular domain of the protein is located near the polypeptide exit tunnel on the outside of the subunit, while an extended beta-hairpin is found that lines the wall of the exit tunnel in the center of the 70S ribosome. This is Large ribosomal subunit protein uL22 from Streptococcus sanguinis (strain SK36).